The chain runs to 38 residues: Large ribosomal subunit protein bL36 (38 aa).

The protein belongs to the bacterial ribosomal protein bL36 family.

In Kosmotoga olearia (strain ATCC BAA-1733 / DSM 21960 / TBF 19.5.1), this protein is Large ribosomal subunit protein bL36.